Reading from the N-terminus, the 192-residue chain is Molybdenum cofactor guanylyltransferase (192 aa).

The GTP site is built by Lys-21, Asp-67, and Asp-101. Position 101 (Asp-101) interacts with Mg(2+).

This sequence belongs to the MobA family. In terms of assembly, monomer. It depends on Mg(2+) as a cofactor.

The protein localises to the cytoplasm. It carries out the reaction Mo-molybdopterin + GTP + H(+) = Mo-molybdopterin guanine dinucleotide + diphosphate. In terms of biological role, transfers a GMP moiety from GTP to Mo-molybdopterin (Mo-MPT) cofactor (Moco or molybdenum cofactor) to form Mo-molybdopterin guanine dinucleotide (Mo-MGD) cofactor. The chain is Molybdenum cofactor guanylyltransferase from Neisseria meningitidis serogroup C / serotype 2a (strain ATCC 700532 / DSM 15464 / FAM18).